A 358-amino-acid polypeptide reads, in one-letter code: DNA-directed RNA polymerase subunit alpha (358 aa).

Residues 1 to 231 (MIQNVTDDKI…NIFLSLSNSS (231 aa)) are alpha N-terminal domain (alpha-NTD). The segment at 266–358 (QESLGWKKIS…LELINNKDIS (93 aa)) is alpha C-terminal domain (alpha-CTD).

The protein belongs to the RNA polymerase alpha chain family. As to quaternary structure, in plastids the minimal PEP RNA polymerase catalytic core is composed of four subunits: alpha, beta, beta', and beta''. When a (nuclear-encoded) sigma factor is associated with the core the holoenzyme is formed, which can initiate transcription.

The protein localises to the plastid. The protein resides in the chloroplast. The enzyme catalyses RNA(n) + a ribonucleoside 5'-triphosphate = RNA(n+1) + diphosphate. In terms of biological role, DNA-dependent RNA polymerase catalyzes the transcription of DNA into RNA using the four ribonucleoside triphosphates as substrates. This is DNA-directed RNA polymerase subunit alpha from Chara vulgaris (Common stonewort).